We begin with the raw amino-acid sequence, 931 residues long: Protocadherin gamma-A4 (931 aa).

The first 28 residues, 1 to 28 (MAAPPARPDHTRLLHICLLLGVLVEIRA), serve as a signal peptide directing secretion. 6 Cadherin domains span residues 29-133 (EQIR…PPSF), 134-242 (GTEQ…APVF), 243-347 (TQPE…APEV), 348-452 (TVTS…PPTF), 453-567 (PHAS…YPTF), and 570-682 (DDST…KPSA). The Extracellular portion of the chain corresponds to 29–692 (EQIRYSVFEE…DPDDSGLTLY (664 aa)). 2 N-linked (GlcNAc...) asparagine glycosylation sites follow: Asn419 and Asn545. The chain crosses the membrane as a helical span at residues 693–713 (LVVSVAAVSCVFLAFVTVLLA). The Cytoplasmic segment spans residues 714–931 (LKLRRWHKSR…KKKSGKKEKK (218 aa)). Disordered stretches follow at residues 801–840 (KGDP…WPNN) and 901–931 (ATLT…KEKK). A compositionally biased stretch (polar residues) spans 805–840 (NLQQAPPNTDWRFSQAQRPGTSGSQNGDDTGTWPNN). Basic residues predominate over residues 921–931 (NKKKSGKKEKK).

Its subcellular location is the cell membrane. In terms of biological role, potential calcium-dependent cell-adhesion protein. May be involved in the establishment and maintenance of specific neuronal connections in the brain. The chain is Protocadherin gamma-A4 (PCDHGA4) from Pan troglodytes (Chimpanzee).